Consider the following 142-residue polypeptide: Protein tost-1 (142 aa).

Residues 97–123 (KVFEEEDKENAPTKKAVLKPSSTDEKK) are disordered.

As to quaternary structure, component of the tost-1 variant of the PETISCO complex (also called the pid-3, erh-2, tofu-6, and ife-3 small RNA complex) containing at least tost-1, tofu-6, ife-3, pid-3, and erh-2, which plays an essential role in embryogenesis. Within the complex interacts with erh-2. Within the complex interacts with pid-3 and tofu-6. In contrast to the pid-1 variant of the PETISCO complex, the tost-1 variant of the PETISCO complex plays a minor role in the biogenesis of a class of 21 nucleotide PIWI-interacting RNAs (piRNAs) that possess a uracil residue at the 5'-end (also called 21U-RNAs). In terms of tissue distribution, expressed in the germline.

The protein localises to the cytoplasm. It is found in the nucleus. Functionally, component of the tost-1 variant of the PETISCO complex which plays an essential role in embryogenesis. Within the complex acts as an adapter which binds to the complex via erh-2. Does not seem to play a role in the biogenesis of a class of 21 nucleotide PIWI-interacting RNAs (piRNAs) that possess a uracil residue at the 5'-end (also called 21U-RNAs). May inhibit 21U-RNA accumulation. Required for chromosome segregation and cell division in early embryos. In Caenorhabditis elegans, this protein is Protein tost-1.